Consider the following 172-residue polypeptide: 3-phenylpropionate/cinnamic acid dioxygenase subunit beta (172 aa).

It belongs to the bacterial ring-hydroxylating dioxygenase beta subunit family. As to quaternary structure, this dioxygenase system consists of four proteins: the two subunits of the hydroxylase component (HcaE and HcaF), a ferredoxin (HcaC) and a ferredoxin reductase (HcaD).

It catalyses the reaction 3-phenylpropanoate + NADH + O2 + H(+) = 3-(cis-5,6-dihydroxycyclohexa-1,3-dien-1-yl)propanoate + NAD(+). The enzyme catalyses (E)-cinnamate + NADH + O2 + H(+) = (2E)-3-(cis-5,6-dihydroxycyclohexa-1,3-dien-1-yl)prop-2-enoate + NAD(+). Its pathway is aromatic compound metabolism; 3-phenylpropanoate degradation. Functionally, part of the multicomponent 3-phenylpropionate dioxygenase. Converts 3-phenylpropionic acid (PP) and cinnamic acid (CI) into 3-phenylpropionate-dihydrodiol (PP-dihydrodiol) and cinnamic acid-dihydrodiol (CI-dihydrodiol), respectively. The protein is 3-phenylpropionate/cinnamic acid dioxygenase subunit beta of Escherichia coli O7:K1 (strain IAI39 / ExPEC).